A 476-amino-acid polypeptide reads, in one-letter code: MSPQTETKASVGFKAGVKDYRLTYYTPEYETKDTDILAAFRVSPQPGVPPEEAGAAVAAESSTGTWTTVWTDGLTSLDRYKGRCYHIEPVPGEDSQWICYVAYPLDLFEEGSVTNMFTSIVGNVFGFKALRALRLEDLRIPPTYSKTFQGPPHGIQVERDKLNKYGRPLLGCTIKPKLGLSAKNYGRACYECLRGGLDFTKDDENVNSQPFMRWRDRFVFCAEAIYKSQAETGEIKGHYLNATAGTCEEMMKRAVFARELGVPIVMHDYLTGGFTANTTLAHYCRDNGLLLHIHRAMHAVIDRQKNHGMHFRVLAKALRMSGGDHIHAGTVVGKLEGEREITLGFVDLLRDDFIEKDRARGIFFTQDWVSMPGVIPVASGGIHVWHMPALTEIFGDDSVLQFGGGTLGHPWGNAPGAAANRVALEACVQARNEGRDLAREGNEIIRAACKWSPELAAACEVWKAIKFEFAPVDTID.

Residues 1-2 constitute a propeptide that is removed on maturation; sequence MS. At P3 the chain carries N-acetylproline. K14 carries the N6,N6,N6-trimethyllysine modification. N123 and T173 together coordinate substrate. The active-site Proton acceptor is the K175. Residue K177 coordinates substrate. The Mg(2+) site is built by K201, D203, and E204. K201 carries the post-translational modification N6-carboxylysine. H294 functions as the Proton acceptor in the catalytic mechanism. The substrate site is built by R295, H327, and S379.

The protein belongs to the RuBisCO large chain family. Type I subfamily. Heterohexadecamer of 8 large chains and 8 small chains; disulfide-linked. The disulfide link is formed within the large subunit homodimers. Mg(2+) serves as cofactor. Post-translationally, the disulfide bond which can form in the large chain dimeric partners within the hexadecamer appears to be associated with oxidative stress and protein turnover.

It is found in the plastid. It localises to the chloroplast. It carries out the reaction 2 (2R)-3-phosphoglycerate + 2 H(+) = D-ribulose 1,5-bisphosphate + CO2 + H2O. It catalyses the reaction D-ribulose 1,5-bisphosphate + O2 = 2-phosphoglycolate + (2R)-3-phosphoglycerate + 2 H(+). RuBisCO catalyzes two reactions: the carboxylation of D-ribulose 1,5-bisphosphate, the primary event in carbon dioxide fixation, as well as the oxidative fragmentation of the pentose substrate in the photorespiration process. Both reactions occur simultaneously and in competition at the same active site. The protein is Ribulose bisphosphate carboxylase large chain of Brachypodium distachyon (Purple false brome).